Reading from the N-terminus, the 453-residue chain is Homogentisate 1,2-dioxygenase (453 aa).

H306 functions as the Proton acceptor in the catalytic mechanism. H349 and E355 together coordinate Fe cation. Homogentisate-binding residues include Y364 and H385. Position 385 (H385) interacts with Fe cation.

The protein belongs to the homogentisate dioxygenase family. In terms of assembly, hexamer; dimer of trimers. It depends on Fe cation as a cofactor.

It carries out the reaction homogentisate + O2 = 4-maleylacetoacetate + H(+). Its pathway is amino-acid degradation; L-phenylalanine degradation; acetoacetate and fumarate from L-phenylalanine: step 4/6. Functionally, involved in the catabolism of homogentisate (2,5-dihydroxyphenylacetate or 2,5-OH-PhAc), a central intermediate in the degradation of phenylalanine and tyrosine. Catalyzes the oxidative ring cleavage of the aromatic ring of homogentisate to yield maleylacetoacetate. This is Homogentisate 1,2-dioxygenase from Rhizobium etli (strain CIAT 652).